Consider the following 726-residue polypeptide: Catalase-peroxidase (726 aa).

The interval 1 to 33 (MSTTDDTHNTLSTGKCPFHQGGHDRSAGAGTAS) is disordered. Residues 105 to 226 (WHGAGTYRSI…LGATEMGLIY (122 aa)) constitute a cross-link (tryptophyl-tyrosyl-methioninium (Trp-Tyr) (with M-252)). His106 (proton acceptor) is an active-site residue. Residues 226–252 (YVNPEGPDHSGEPLSAAAAIRATFGNM) constitute a cross-link (tryptophyl-tyrosyl-methioninium (Tyr-Met) (with W-105)). His267 provides a ligand contact to heme b.

The protein belongs to the peroxidase family. Peroxidase/catalase subfamily. In terms of assembly, homodimer or homotetramer. Heme b serves as cofactor. Post-translationally, formation of the three residue Trp-Tyr-Met cross-link is important for the catalase, but not the peroxidase activity of the enzyme.

The catalysed reaction is H2O2 + AH2 = A + 2 H2O. The enzyme catalyses 2 H2O2 = O2 + 2 H2O. In terms of biological role, bifunctional enzyme with both catalase and broad-spectrum peroxidase activity. In Salmonella typhi, this protein is Catalase-peroxidase.